The chain runs to 89 residues: MAKKSKIAKFQKQQKLVEQYAELRRELKEKGDYEALRKLPKDSNPNRLKNRDLIDGRPHAYMRKFGMSRINFRNLAYKGQIPGIKKASW.

This sequence belongs to the universal ribosomal protein uS14 family. Part of the 30S ribosomal subunit. Contacts proteins S3 and S10.

Binds 16S rRNA, required for the assembly of 30S particles and may also be responsible for determining the conformation of the 16S rRNA at the A site. This Streptococcus agalactiae serotype Ia (strain ATCC 27591 / A909 / CDC SS700) protein is Small ribosomal subunit protein uS14A.